The sequence spans 164 residues: Crossover junction endodeoxyribonuclease RuvC (164 aa).

Active-site residues include aspartate 7, glutamate 67, and aspartate 140. Residues aspartate 7, glutamate 67, and aspartate 140 each coordinate Mg(2+).

Belongs to the RuvC family. Homodimer which binds Holliday junction (HJ) DNA. The HJ becomes 2-fold symmetrical on binding to RuvC with unstacked arms; it has a different conformation from HJ DNA in complex with RuvA. In the full resolvosome a probable DNA-RuvA(4)-RuvB(12)-RuvC(2) complex forms which resolves the HJ. Mg(2+) is required as a cofactor.

The protein resides in the cytoplasm. The catalysed reaction is Endonucleolytic cleavage at a junction such as a reciprocal single-stranded crossover between two homologous DNA duplexes (Holliday junction).. Functionally, the RuvA-RuvB-RuvC complex processes Holliday junction (HJ) DNA during genetic recombination and DNA repair. Endonuclease that resolves HJ intermediates. Cleaves cruciform DNA by making single-stranded nicks across the HJ at symmetrical positions within the homologous arms, yielding a 5'-phosphate and a 3'-hydroxyl group; requires a central core of homology in the junction. The consensus cleavage sequence is 5'-(A/T)TT(C/G)-3'. Cleavage occurs on the 3'-side of the TT dinucleotide at the point of strand exchange. HJ branch migration catalyzed by RuvA-RuvB allows RuvC to scan DNA until it finds its consensus sequence, where it cleaves and resolves the cruciform DNA. This is Crossover junction endodeoxyribonuclease RuvC from Finegoldia magna (strain ATCC 29328 / DSM 20472 / WAL 2508) (Peptostreptococcus magnus).